Here is a 160-residue protein sequence, read N- to C-terminus: RNA pyrophosphohydrolase (160 aa).

One can recognise a Nudix hydrolase domain in the interval 10–154 (PYRPCVGVML…KRDVYVAVLD (145 aa)). Residues 44–65 (GGVEKGEDPRAAALRELWEETG) carry the Nudix box motif.

Belongs to the Nudix hydrolase family. RppH subfamily. A divalent metal cation is required as a cofactor.

Functionally, accelerates the degradation of transcripts by removing pyrophosphate from the 5'-end of triphosphorylated RNA, leading to a more labile monophosphorylated state that can stimulate subsequent ribonuclease cleavage. The sequence is that of RNA pyrophosphohydrolase from Roseobacter denitrificans (strain ATCC 33942 / OCh 114) (Erythrobacter sp. (strain OCh 114)).